The sequence spans 172 residues: Large ribosomal subunit protein uL10 (172 aa).

Belongs to the universal ribosomal protein uL10 family. Part of the ribosomal stalk of the 50S ribosomal subunit. The N-terminus interacts with L11 and the large rRNA to form the base of the stalk. The C-terminus forms an elongated spine to which L12 dimers bind in a sequential fashion forming a multimeric L10(L12)X complex.

Forms part of the ribosomal stalk, playing a central role in the interaction of the ribosome with GTP-bound translation factors. This chain is Large ribosomal subunit protein uL10, found in Francisella tularensis subsp. holarctica (strain FTNF002-00 / FTA).